The sequence spans 481 residues: Protein nucleotidyltransferase YdiU (481 aa).

Residues Gly-85, Gly-87, Arg-88, Lys-108, Asp-120, Gly-121, Arg-172, and Arg-179 each coordinate ATP. Catalysis depends on Asp-248, which acts as the Proton acceptor. Asn-249 and Asp-258 together coordinate Mg(2+). Residue Asp-258 participates in ATP binding.

The protein belongs to the SELO family. The cofactor is Mg(2+). Mn(2+) serves as cofactor.

The catalysed reaction is L-seryl-[protein] + ATP = 3-O-(5'-adenylyl)-L-seryl-[protein] + diphosphate. It carries out the reaction L-threonyl-[protein] + ATP = 3-O-(5'-adenylyl)-L-threonyl-[protein] + diphosphate. The enzyme catalyses L-tyrosyl-[protein] + ATP = O-(5'-adenylyl)-L-tyrosyl-[protein] + diphosphate. It catalyses the reaction L-histidyl-[protein] + UTP = N(tele)-(5'-uridylyl)-L-histidyl-[protein] + diphosphate. The catalysed reaction is L-seryl-[protein] + UTP = O-(5'-uridylyl)-L-seryl-[protein] + diphosphate. It carries out the reaction L-tyrosyl-[protein] + UTP = O-(5'-uridylyl)-L-tyrosyl-[protein] + diphosphate. Its function is as follows. Nucleotidyltransferase involved in the post-translational modification of proteins. It can catalyze the addition of adenosine monophosphate (AMP) or uridine monophosphate (UMP) to a protein, resulting in modifications known as AMPylation and UMPylation. The protein is Protein nucleotidyltransferase YdiU of Cereibacter sphaeroides (strain ATCC 17025 / ATH 2.4.3) (Rhodobacter sphaeroides).